Consider the following 152-residue polypeptide: Neuropeptide W (152 aa).

Residues Met-1–Ala-32 form the signal peptide. Positions Ala-65 to Glu-152 are excised as a propeptide. Disordered regions lie at residues Gly-79–Gly-108 and Ser-122–Glu-152. The span at Gly-96 to Pro-106 shows a compositional bias: pro residues.

The protein belongs to the neuropeptide B/W family.

The protein localises to the secreted. Plays a regulatory role in the organization of neuroendocrine signals accessing the anterior pituitary gland. Stimulates water drinking and food intake. May play a role in the hypothalamic response to stress. This Sus scrofa (Pig) protein is Neuropeptide W (NPW).